Consider the following 119-residue polypeptide: Ribonuclease P protein component (119 aa).

It belongs to the RnpA family. As to quaternary structure, consists of a catalytic RNA component (M1 or rnpB) and a protein subunit.

It carries out the reaction Endonucleolytic cleavage of RNA, removing 5'-extranucleotides from tRNA precursor.. RNaseP catalyzes the removal of the 5'-leader sequence from pre-tRNA to produce the mature 5'-terminus. It can also cleave other RNA substrates such as 4.5S RNA. The protein component plays an auxiliary but essential role in vivo by binding to the 5'-leader sequence and broadening the substrate specificity of the ribozyme. In Aeromonas hydrophila subsp. hydrophila (strain ATCC 7966 / DSM 30187 / BCRC 13018 / CCUG 14551 / JCM 1027 / KCTC 2358 / NCIMB 9240 / NCTC 8049), this protein is Ribonuclease P protein component.